Consider the following 218-residue polypeptide: Autophagy-related protein 101 (218 aa).

The protein belongs to the ATG101 family.

The protein localises to the cytoplasm. Its subcellular location is the preautophagosomal structure. Functionally, autophagy factor required for autophagosome formation. The polypeptide is Autophagy-related protein 101 (atg101) (Xenopus laevis (African clawed frog)).